The sequence spans 345 residues: Flotillin-like protein FloA 1 (345 aa).

The chain crosses the membrane as a helical span at residues 26 to 46 (LLLLVGVFLALFFAAVLGFFF).

Belongs to the flotillin-like FloA family. As to quaternary structure, homooligomerizes.

The protein resides in the cell membrane. The protein localises to the membrane raft. Functionally, found in functional membrane microdomains (FMM) that may be equivalent to eukaryotic membrane rafts. FMMs are highly dynamic and increase in number as cells age. Flotillins are thought to be important factors in membrane fluidity. The chain is Flotillin-like protein FloA 1 from Rhodopirellula baltica (strain DSM 10527 / NCIMB 13988 / SH1).